A 294-amino-acid chain; its full sequence is Phosphatidylserine decarboxylase proenzyme (294 aa).

Active-site charge relay system; for autoendoproteolytic cleavage activity residues include Asp-92, His-149, and Ser-252. Catalysis depends on Ser-252, which acts as the Schiff-base intermediate with substrate; via pyruvic acid; for decarboxylase activity. Ser-252 is modified (pyruvic acid (Ser); by autocatalysis).

Belongs to the phosphatidylserine decarboxylase family. PSD-B subfamily. Prokaryotic type I sub-subfamily. In terms of assembly, heterodimer of a large membrane-associated beta subunit and a small pyruvoyl-containing alpha subunit. Pyruvate serves as cofactor. Post-translationally, is synthesized initially as an inactive proenzyme. Formation of the active enzyme involves a self-maturation process in which the active site pyruvoyl group is generated from an internal serine residue via an autocatalytic post-translational modification. Two non-identical subunits are generated from the proenzyme in this reaction, and the pyruvate is formed at the N-terminus of the alpha chain, which is derived from the carboxyl end of the proenzyme. The autoendoproteolytic cleavage occurs by a canonical serine protease mechanism, in which the side chain hydroxyl group of the serine supplies its oxygen atom to form the C-terminus of the beta chain, while the remainder of the serine residue undergoes an oxidative deamination to produce ammonia and the pyruvoyl prosthetic group on the alpha chain. During this reaction, the Ser that is part of the protease active site of the proenzyme becomes the pyruvoyl prosthetic group, which constitutes an essential element of the active site of the mature decarboxylase.

Its subcellular location is the cell membrane. The enzyme catalyses a 1,2-diacyl-sn-glycero-3-phospho-L-serine + H(+) = a 1,2-diacyl-sn-glycero-3-phosphoethanolamine + CO2. It functions in the pathway phospholipid metabolism; phosphatidylethanolamine biosynthesis; phosphatidylethanolamine from CDP-diacylglycerol: step 2/2. Functionally, catalyzes the formation of phosphatidylethanolamine (PtdEtn) from phosphatidylserine (PtdSer). The chain is Phosphatidylserine decarboxylase proenzyme from Bordetella avium (strain 197N).